The primary structure comprises 67 residues: Large ribosomal subunit protein bL35 (67 aa).

Belongs to the bacterial ribosomal protein bL35 family.

This chain is Large ribosomal subunit protein bL35, found in Allorhizobium ampelinum (strain ATCC BAA-846 / DSM 112012 / S4) (Agrobacterium vitis (strain S4)).